We begin with the raw amino-acid sequence, 37 residues long: Cytochrome b6-f complex subunit 5 (37 aa).

The chain crosses the membrane as a helical span at residues 5–25 (LLSGIVLGLIPITLAGLFVTA).

This sequence belongs to the PetG family. In terms of assembly, the 4 large subunits of the cytochrome b6-f complex are cytochrome b6, subunit IV (17 kDa polypeptide, PetD), cytochrome f and the Rieske protein, while the 4 small subunits are PetG, PetL, PetM and PetN. The complex functions as a dimer.

Its subcellular location is the plastid. It localises to the chloroplast thylakoid membrane. Functionally, component of the cytochrome b6-f complex, which mediates electron transfer between photosystem II (PSII) and photosystem I (PSI), cyclic electron flow around PSI, and state transitions. PetG is required for either the stability or assembly of the cytochrome b6-f complex. In Cryptomeria japonica (Japanese cedar), this protein is Cytochrome b6-f complex subunit 5.